The primary structure comprises 682 residues: DNA-directed RNA polymerase subunit beta' (682 aa).

Positions 69, 71, 87, and 90 each coordinate Zn(2+). Mg(2+) contacts are provided by D489, D491, and D493.

The protein belongs to the RNA polymerase beta' chain family. RpoC1 subfamily. In plastids the minimal PEP RNA polymerase catalytic core is composed of four subunits: alpha, beta, beta', and beta''. When a (nuclear-encoded) sigma factor is associated with the core the holoenzyme is formed, which can initiate transcription. The cofactor is Mg(2+). Zn(2+) serves as cofactor.

The protein localises to the plastid. Its subcellular location is the chloroplast. It catalyses the reaction RNA(n) + a ribonucleoside 5'-triphosphate = RNA(n+1) + diphosphate. Its function is as follows. DNA-dependent RNA polymerase catalyzes the transcription of DNA into RNA using the four ribonucleoside triphosphates as substrates. The polypeptide is DNA-directed RNA polymerase subunit beta' (Oryza nivara (Indian wild rice)).